A 385-amino-acid chain; its full sequence is MNPVPAQREYFLDSIRAWLMLLGIPFHISLIYSSHTWHVNSAEPSLWLTLFNDFIHSFRMQVFFVISGYFSYMLFLRYPLKKWWKVRVERVGIPMLTAIPLLTLPQFIMLQYVKGKAESWPGLSLYDKYNTLAWELISHLWFLLVLVVMTTLCVWIFKRIRNNLENSDKTNKKFSMVKLSVIFLCLGIGYAVIRRTIFIVYPPILSNGMFNFIVMQTLFYLPFFILGALAFIFPHLKTLFTTPSRGCTLAAALAFVAYLLNQRYGSGDAWMYETESVITMVLGLWMVNVVFSFGHRLLNFQSARVTYFVNASLFIYLVHHPLTLFFGAYITPHITSNWLGFLCGLIFVVGIAIILYEIHLRIPLLKFLFSGKPVVKRENDKAPAR.

A run of 10 helical transmembrane segments spans residues 17-37, 60-80, 91-111, 137-157, 173-193, 212-232, 239-259, 274-294, 311-331, and 338-358; these read AWLM…SHTW, MQVF…RYPL, VGIP…IMLQ, ISHL…VWIF, KFSM…YAVI, FIVM…LAFI, LFTT…VAYL, TESV…FSFG, ASLF…AYIT, and WLGF…LYEI.

It belongs to the acyltransferase 3 family. OpgC subfamily.

The protein resides in the cell membrane. The protein operates within glycan metabolism; osmoregulated periplasmic glucan (OPG) biosynthesis. Necessary for the succinyl substitution of periplasmic glucans. Could catalyze the transfer of succinyl residues from the cytoplasmic side of the membrane to the nascent glucan backbones on the periplasmic side of the membrane. This Escherichia coli O17:K52:H18 (strain UMN026 / ExPEC) protein is Glucans biosynthesis protein C.